The sequence spans 25 residues: MVINNNISAINAQRTLKFRQVDLKK.

The protein belongs to the bacterial flagellin family. The flagellum consists of an outer layer composed of two sheath proteins, flaA1 (44 kDa) and flaA2 (35 kDa) around a core that contains three proteins flaB1 (37 kDa), flaB2 (34 kDa) and flaB3 (32 kDa).

The protein localises to the periplasmic flagellum. The protein resides in the periplasm. Component of the core of the flagella. The sequence is that of Flagellar filament core protein flaB1 (flaB1) from Brachyspira hyodysenteriae (Treponema hyodysenteriae).